The primary structure comprises 210 residues: MAKSNEIKAVLTSPIISNNPITLQILGICSALAVTSKLENAVVMTVAVLFVTAFSNFFISTIRNYIPNSVRIIVQMAIIASLVIVVDQFLRAYAFSISKQLSVYVGLIITNCIVMGRAEAFAMKNKPIASFMDGVGNGLGYGVILILVGAFRELFGSGSLYGFVILPLTSNGGWYQSNGLLLLAPSAFFIVGGIIWAVRTMRPDQVEPKE.

Helical transmembrane passes span 42 to 62, 66 to 86, 103 to 123, 131 to 151, 154 to 174, and 178 to 198; these read VVMTVAVLFVTAFSNFFISTI, IPNSVRIIVQMAIIASLVIVV, VYVGLIITNCIVMGRAEAFAM, FMDGVGNGLGYGVILILVGAF, LFGSGSLYGFVILPLTSNGGW, and NGLLLLAPSAFFIVGGIIWAV.

It belongs to the NqrDE/RnfAE family. As to quaternary structure, composed of six subunits; NqrA, NqrB, NqrC, NqrD, NqrE and NqrF.

The protein localises to the cell inner membrane. It carries out the reaction a ubiquinone + n Na(+)(in) + NADH + H(+) = a ubiquinol + n Na(+)(out) + NAD(+). Its function is as follows. NQR complex catalyzes the reduction of ubiquinone-1 to ubiquinol by two successive reactions, coupled with the transport of Na(+) ions from the cytoplasm to the periplasm. NqrA to NqrE are probably involved in the second step, the conversion of ubisemiquinone to ubiquinol. This is Na(+)-translocating NADH-quinone reductase subunit D from Psychromonas ingrahamii (strain DSM 17664 / CCUG 51855 / 37).